The primary structure comprises 318 residues: Epithelial-stromal interaction protein 1 (318 aa).

A disordered region spans residues 1–60 (MNTRNRVVNSGLGASPASRPTRDPQDPSGRQGELSPVEDQREGLEAAPKGPSRESVVHAG). Coiled coils occupy residues 73–188 (NINR…HQQY) and 240–280 (LKAE…HQTE).

In terms of tissue distribution, highly expressed in placenta, small intestine, spleen, kidney, thymus, liver, salivary gland and testes. Weakly expressed in breast, skeletal muscle and colon. Highly expressed in breast cancer upon interaction between tumor cells and stromal cells in vitro. Expressed in blood mononuclear cells from patients with systemic lupus erythematosus (SLE).

In terms of biological role, plays a role in M1 macrophage polarization and is required for the proper regulation of gene expression during M1 versus M2 macrophage differentiation. Might play a role in RELA/p65 and STAT1 phosphorylation and nuclear localization upon activation of macrophages. The sequence is that of Epithelial-stromal interaction protein 1 (EPSTI1) from Homo sapiens (Human).